Consider the following 217-residue polypeptide: Trimethylamine corrinoid protein (217 aa).

The region spanning 1 to 92 (MANKEEIIAK…EMEKRKSQTK (92 aa)) is the B12-binding N-terminal domain. The region spanning 94–217 (LGTVAIGTIE…VAKVKAALNV (124 aa)) is the B12-binding domain. H107 lines the methylcob(III)alamin pocket.

It belongs to the methylamine corrinoid protein family. Can form a complex with MttB.

The protein operates within one-carbon metabolism; methanogenesis from trimethylamine. Functionally, acts probably as a methyl group carrier between MttB and either MtbA or MtaA. In Methanosarcina barkeri, this protein is Trimethylamine corrinoid protein.